The following is a 345-amino-acid chain: Heat-inducible transcription repressor HrcA (345 aa).

This sequence belongs to the HrcA family.

In terms of biological role, negative regulator of class I heat shock genes (grpE-dnaK-dnaJ and groELS operons). Prevents heat-shock induction of these operons. The sequence is that of Heat-inducible transcription repressor HrcA from Dehalococcoides mccartyi (strain ATCC BAA-2100 / JCM 16839 / KCTC 5957 / BAV1).